Here is a 283-residue protein sequence, read N- to C-terminus: ACT domain-containing protein DS12, chloroplastic (283 aa).

The N-terminal 56 residues, 1-56 (MAEMAVTAALRPCSGVSPAVSGTSHRRRRPAAWRALAPPPPHAGLRLSSPAVRVPR), are a transit peptide targeting the chloroplast. A disordered region spans residues 14–78 (SGVSPAVSGT…SNTDTVPTPK (65 aa)). Residues 48–63 (SSPAVRVPRAASSAAV) show a composition bias toward low complexity. ACT domains follow at residues 91 to 171 (IVEI…ASSQ) and 206 to 276 (LLVV…LRRP).

Its subcellular location is the plastid. It localises to the chloroplast. The chain is ACT domain-containing protein DS12, chloroplastic from Oryza sativa subsp. indica (Rice).